We begin with the raw amino-acid sequence, 1135 residues long: MASGGNQSSPPPPAAAASSEEEEEDGDTADRAQPAGSPSHQIQQRFEELCSRLNMDEAARAEAWSSYRSMSESYTLEGNDLHWLACALYVACRKSVPTVSKGTAEGNYVSLTRILRCSEQSLIEFFNKMKKWEDMANLPPHFRERTERLERNFTVSAVIFKKYEPIFQDIFKYPQEEQPRQQRGRKQRRQPCTTSEIFHFCWVLFIYAKGNFPMISDDLVNSYHLLLCALDLVYGNALQCSNRKELVNPNFKGVSEDGHPRDSHPSSDPPCVIEKLCSLHDGLVLEAKGIKQHFWKPYIRKLFEKKLLRGKEENLTGFLEPGNFAESFKAVNKAYEEYVLATGSLDERIFLGEDAEEEVGTFSRCVSAASGTESAERTQMRDILQQHLDKSKTLRVCNPLTGVRYVQENSPCVTPVSTATHSLNRLHTMLAGLRNAPSEKLEQILRSCSRDPTRAIADRLREMYEIYSQHFQPDENVSNCAKEMANKHFRFAEMLYYKVLESVIEQEQKRLGDMDLSGVLEQDAFHKSLLACCLEVVAFSYKPPGNFPFIAEIFDVPHYHFYKVIEVFIRAEDGLCREVVKHLNQIEEQILDHLAWKTKSPLWDRIRDNENRVPTCEEVTPPHNLERTDEIYIAGSPLTPRRVGEVRTDAGGLGRSVTSPTTLYDRYSSPTVSTTRRRLFESDSPSEGSTAGRIPPQPLVNAVPVQNVSGETVSVTPVPGQTLVTMATATVTANNGQTVTIPVQGIANENGGITFFPVQVNVGGQAQAVTGSIQPLSAQALAGSLSSQQVTGTTLQVPGPVAIQQISPGGQQQNQGQPLTSSSIRPRKTSSLSLFFRKVYYLAGVRLRDLCTKLDISDELRKKIWTCFEFSIVQCPELMMDRHLDQLLMCAIYVMAKVTKEDKSFQNIMRCYRTQPQARSQVYRSVLIKGKRRNSGSCENRSHQNSPTELNTDRASRDSSPVMRSNSTLPVPQPSSAPPTPTRLTGANSDIEEEERGDLIQFYNNIYRKQIQTFAMKYSQANSQMDTPPLSPYPFVRTGSPRRVQLSQSHPIYISPHKNEAMLSPREKIFYYFSNSPSKRLREINSMIRTGETPTKKRGILLDDGSESPAKRICPENHSALLRRLQDVANDRGSH.

The interval 1-43 (MASGGNQSSPPPPAAAASSEEEEEDGDTADRAQPAGSPSHQIQ) is disordered. Ser-410 carries the phosphoserine modification. A Phosphothreonine modification is found at Thr-414. Positions 414–613 (TPVSTATHSL…DRIRDNENRV (200 aa)) are domain A. Positions 414 to 1021 (TPVSTATHSL…QTFAMKYSQA (608 aa)) are pocket; binds E1A. An O-linked (GlcNAc) serine glycan is attached at Ser-417. Positions 614–824 (PTCEEVTPPH…QGQPLTSSSI (211 aa)) are spacer. Position 636 is a phosphoserine (Ser-636). Thr-639 bears the Phosphothreonine mark. 3 disordered regions span residues 649-698 (DAGG…PPQP), 806-825 (ISPGGQQQNQGQPLTSSSIR), and 932-995 (RRNS…EEEE). The segment covering 656-674 (SVTSPTTLYDRYSSPTVST) has biased composition (polar residues). Ser-659, Ser-669, and Ser-684 each carry phosphoserine. The segment covering 806–818 (ISPGGQQQNQGQP) has biased composition (low complexity). The segment at 825-1021 (RPRKTSSLSL…QTFAMKYSQA (197 aa)) is domain B. 2 stretches are compositionally biased toward polar residues: residues 935-950 (SGSCENRSHQNSPTEL) and 958-969 (DSSPVMRSNSTL). Phosphoserine occurs at positions 942, 946, 960, 965, and 967. Thr-968 carries the post-translational modification Phosphothreonine. Residues 971–981 (VPQPSSAPPTP) are compositionally biased toward pro residues. A phosphoserine mark is found at Ser-975 and Ser-976. Position 980 is a phosphothreonine (Thr-980). Residues Ser-1031, Ser-1064, Ser-1076, and Ser-1108 each carry the phosphoserine modification.

Belongs to the retinoblastoma protein (RB) family. Interacts with AATF, KMT5B and KMT5C. Component of the DREAM complex (also named LINC complex) at least composed of E2F4, E2F5, LIN9, LIN37, LIN52, LIN54, MYBL1, MYBL2, RBL1, RBL2, RBBP4, TFDP1 and TFDP2. The complex exists in quiescent cells where it represses cell cycle-dependent genes. It dissociates in S phase when LIN9, LIN37, LIN52 and LIN54 form a subcomplex that binds to MYBL2. Interacts with USP4. Part of the peroxisome proliferator activated receptor alpha (PPAR-alpha) interacting complex (PRIC). Interacts with RINT1. Interacts with PML. Interacts with RBBP9. Interacts with CD53. Post-translationally, during G0 and early G1 phase of the cell cycle, phosphorylated on Ser-636 and on 5 sites within the domain B. Phosphorylation on Ser-669 in G1 leads to its ubiquitin-dependent proteolysis.

Its subcellular location is the nucleus. Functionally, key regulator of entry into cell division. Directly involved in heterochromatin formation by maintaining overall chromatin structure and, in particular, that of constitutive heterochromatin by stabilizing histone methylation. Recruits and targets histone methyltransferases KMT5B and KMT5C, leading to epigenetic transcriptional repression. Controls histone H4 'Lys-20' trimethylation. Probably acts as a transcription repressor by recruiting chromatin-modifying enzymes to promoters. Potent inhibitor of E2F-mediated trans-activation, associates preferentially with E2F5. Binds to cyclins A and E. Binds to and may be involved in the transforming capacity of the adenovirus E1A protein. May act as a tumor suppressor. The sequence is that of Retinoblastoma-like protein 2 (Rbl2) from Rattus norvegicus (Rat).